A 257-amino-acid polypeptide reads, in one-letter code: NAD-capped RNA hydrolase NudC (257 aa).

2 residues coordinate substrate: lysine 25 and arginine 69. Cysteine 98 and cysteine 101 together coordinate Zn(2+). Substrate is bound at residue glutamate 111. Cysteine 116 and cysteine 119 together coordinate Zn(2+). Tyrosine 124 contributes to the substrate binding site. The Nudix hydrolase domain maps to 125-248 (PQIAPCIIVA…TVARRLIEDT (124 aa)). A divalent metal cation-binding residues include alanine 158, glutamate 174, and glutamate 178. Positions 159–180 (GFVEVGETLEQAVAREVMEESG) match the Nudix box motif. 192-199 (QPWPFPQS) is a substrate binding site. Position 219 (glutamate 219) interacts with a divalent metal cation. Alanine 241 contributes to the substrate binding site.

Belongs to the Nudix hydrolase family. NudC subfamily. In terms of assembly, homodimer. Mg(2+) is required as a cofactor. Requires Mn(2+) as cofactor. Zn(2+) serves as cofactor.

The enzyme catalyses a 5'-end NAD(+)-phospho-ribonucleoside in mRNA + H2O = a 5'-end phospho-adenosine-phospho-ribonucleoside in mRNA + beta-nicotinamide D-ribonucleotide + 2 H(+). It carries out the reaction NAD(+) + H2O = beta-nicotinamide D-ribonucleotide + AMP + 2 H(+). The catalysed reaction is NADH + H2O = reduced beta-nicotinamide D-ribonucleotide + AMP + 2 H(+). Functionally, mRNA decapping enzyme that specifically removes the nicotinamide adenine dinucleotide (NAD) cap from a subset of mRNAs by hydrolyzing the diphosphate linkage to produce nicotinamide mononucleotide (NMN) and 5' monophosphate mRNA. The NAD-cap is present at the 5'-end of some mRNAs and stabilizes RNA against 5'-processing. Has preference for mRNAs with a 5'-end purine. Catalyzes the hydrolysis of a broad range of dinucleotide pyrophosphates. The protein is NAD-capped RNA hydrolase NudC of Escherichia coli O45:K1 (strain S88 / ExPEC).